Reading from the N-terminus, the 57-residue chain is Protein Ric1 (57 aa).

2 helical membrane passes run 8 to 28 (IPRL…QVGC) and 34 to 54 (INCL…VYIL).

Belongs to the UPF0057 (PMP3) family.

It is found in the membrane. The polypeptide is Protein Ric1 (RIC1) (Phytophthora infestans (Potato late blight agent)).